We begin with the raw amino-acid sequence, 417 residues long: NADH-quinone oxidoreductase subunit D (417 aa).

The protein belongs to the complex I 49 kDa subunit family. NDH-1 is composed of 14 different subunits. Subunits NuoB, C, D, E, F, and G constitute the peripheral sector of the complex.

The protein resides in the cell inner membrane. It carries out the reaction a quinone + NADH + 5 H(+)(in) = a quinol + NAD(+) + 4 H(+)(out). In terms of biological role, NDH-1 shuttles electrons from NADH, via FMN and iron-sulfur (Fe-S) centers, to quinones in the respiratory chain. The immediate electron acceptor for the enzyme in this species is believed to be ubiquinone. Couples the redox reaction to proton translocation (for every two electrons transferred, four hydrogen ions are translocated across the cytoplasmic membrane), and thus conserves the redox energy in a proton gradient. The sequence is that of NADH-quinone oxidoreductase subunit D from Ralstonia pickettii (strain 12J).